The primary structure comprises 88 residues: uncharacterized protein (88 aa).

This is an uncharacterized protein from Sputnik virophage.